A 194-amino-acid polypeptide reads, in one-letter code: ATP-dependent Clp protease proteolytic subunit 3 (194 aa).

The active-site Nucleophile is the serine 96. Residue histidine 121 is part of the active site.

The protein belongs to the peptidase S14 family. As to quaternary structure, fourteen ClpP subunits assemble into 2 heptameric rings which stack back to back to give a disk-like structure with a central cavity, resembling the structure of eukaryotic proteasomes.

It is found in the cytoplasm. The enzyme catalyses Hydrolysis of proteins to small peptides in the presence of ATP and magnesium. alpha-casein is the usual test substrate. In the absence of ATP, only oligopeptides shorter than five residues are hydrolyzed (such as succinyl-Leu-Tyr-|-NHMec, and Leu-Tyr-Leu-|-Tyr-Trp, in which cleavage of the -Tyr-|-Leu- and -Tyr-|-Trp bonds also occurs).. Functionally, cleaves peptides in various proteins in a process that requires ATP hydrolysis. Has a chymotrypsin-like activity. Plays a major role in the degradation of misfolded proteins. This is ATP-dependent Clp protease proteolytic subunit 3 from Rhizobium etli (strain ATCC 51251 / DSM 11541 / JCM 21823 / NBRC 15573 / CFN 42).